We begin with the raw amino-acid sequence, 360 residues long: Phospho-N-acetylmuramoyl-pentapeptide-transferase (360 aa).

A run of 10 helical transmembrane segments spans residues 26–46 (AIVS…RMIA), 72–92 (PTMG…LWAY), 94–114 (SNPY…IGFV), 132–152 (WKYF…YLAG), 168–188 (VMPQ…VGTG), 199–219 (GLAI…AWAT), 236–256 (AGEL…FLWF), 263–283 (VFMG…IAVL), 288–308 (FLLV…ILQV), and 338–358 (VIVR…ATLK).

The protein belongs to the glycosyltransferase 4 family. MraY subfamily. Mg(2+) serves as cofactor.

The protein localises to the cell inner membrane. It catalyses the reaction UDP-N-acetyl-alpha-D-muramoyl-L-alanyl-gamma-D-glutamyl-meso-2,6-diaminopimeloyl-D-alanyl-D-alanine + di-trans,octa-cis-undecaprenyl phosphate = di-trans,octa-cis-undecaprenyl diphospho-N-acetyl-alpha-D-muramoyl-L-alanyl-D-glutamyl-meso-2,6-diaminopimeloyl-D-alanyl-D-alanine + UMP. It functions in the pathway cell wall biogenesis; peptidoglycan biosynthesis. Its function is as follows. Catalyzes the initial step of the lipid cycle reactions in the biosynthesis of the cell wall peptidoglycan: transfers peptidoglycan precursor phospho-MurNAc-pentapeptide from UDP-MurNAc-pentapeptide onto the lipid carrier undecaprenyl phosphate, yielding undecaprenyl-pyrophosphoryl-MurNAc-pentapeptide, known as lipid I. This chain is Phospho-N-acetylmuramoyl-pentapeptide-transferase, found in Enterobacter sp. (strain 638).